We begin with the raw amino-acid sequence, 774 residues long: Glycophorin-binding protein 130 (774 aa).

Positions 84–88 (RILAE) match the PEXEL motif motif. 10 disordered regions span residues 97 to 243 (EKTT…AADP), 256 to 291 (LTNT…EYAS), 310 to 334 (DPND…PEGQ), 358 to 383 (NTDP…DPEG), 410 to 434 (DPND…PEGQ), 458 to 481 (NTDP…SDPE), 509 to 533 (DPND…PEGQ), 609 to 632 (DPND…DPEG), 661 to 682 (NDEV…DPEG), and 709 to 734 (DPND…EGQI). Composition is skewed to basic and acidic residues over residues 117 to 140 (TKKD…SEKQ) and 174 to 198 (KKEE…EPKA). Residues 201–228 (VSQKPSTSTRSNNEVKIRAASNQETLTS) show a composition bias toward polar residues. 11 GBP repeats span residues 226 to 275 (LTSA…NKED), 276 to 325 (LTSA…NKED), 326 to 375 (LTSA…NKED), 376 to 425 (LTSA…NKED), 426 to 474 (LTSA…DNKE), 475 to 524 (LTSS…NKED), 525 to 574 (LTSA…NKEE), 575 to 624 (LTSS…NKED), 625 to 674 (LTSA…NKED), 675 to 724 (LTSA…NKED), and 725 to 774 (LTSA…NNEA). Basic and acidic residues-rich tracts occupy residues 264 to 276 (EVER…KEDL), 314 to 326 (DVER…KEDL), 364 to 376 (EVER…KEDL), 414 to 426 (EVER…KEDL), 464 to 476 (EVER…KELT), 513 to 525 (EVER…KEDL), 613 to 625 (EVER…KEDL), 663 to 675 (EVER…KEDL), and 713 to 725 (DVER…KEDL).

As to quaternary structure, interacts with host glycophorin.

The protein resides in the secreted. The protein localises to the cell surface. It localises to the host cytoplasm. Involved in merozoite invasion of host erythrocytes. The chain is Glycophorin-binding protein 130 from Plasmodium falciparum (isolate FCR-3 / Gambia).